We begin with the raw amino-acid sequence, 323 residues long: Calcium homeostasis modulator protein 2 (323 aa).

Residues 1–21 (MAALIAENFRFLSLFFKSKDV) are Cytoplasmic-facing. The interval 14–39 (LFFKSKDVMIFNGLVALGTVGSQELF) is central pore. A helical transmembrane segment spans residues 22–43 (MIFNGLVALGTVGSQELFSVVA). Residues 44–52 (FHCPCSPAR) lie on the Extracellular side of the membrane. Intrachain disulfides connect Cys-46–Cys-130 and Cys-48–Cys-162. The helical transmembrane segment at 53-76 (NYLYGLAAIGVPALVLFIIGIILN) threads the bilayer. Topologically, residues 77–101 (NHTWNLVAECQHRRTKNCSAAPTFL) are cytoplasmic. The helical transmembrane segment at 102–132 (LLSSILGRAAVAPVTWSVISLLRGEAYVCAL) threads the bilayer. Over 133 to 179 (SEFVDPSSLTAREEHFPSAHATEILARFPCKENPDNLSDFREEVSRR) the chain is Extracellular. The interval 145 to 152 (EEHFPSAH) is hemichannel docking. The chain crosses the membrane as a helical span at residues 180-206 (LRYESQLFGWLLIGVVAILVFLTKCLK). Residues 207 to 323 (HYCSPLSYRQ…DNVEMALLPS (117 aa)) lie on the Cytoplasmic side of the membrane. Residues 214–251 (YRQEAYWAQYRANEDQLFQRTAEVHSRVLAANNVRRFF) form an intersubunit interaction region.

This sequence belongs to the CALHM family. As to quaternary structure, homo-undecamer. Two undecameric hemichannels can assemble in a head-to-head manner to form a gap junction. As to expression, placenta.

It localises to the cell membrane. It carries out the reaction ATP(in) = ATP(out). Inhibited by Ca(2+) and ruthenium red in a voltage-dependent way. In terms of biological role, pore-forming subunit of Ca(2+) homeostasis modulator channels. Mediates ATP release from astrocytes and ATP-induced Ca(2+) influx in microglia thus regulating neuronal ATP and Ca(2+) homeostasis, synaptic transmission and neuroinflammatory response. May form intercellular gap junctions. The gating mechanism remains unknown. This chain is Calcium homeostasis modulator protein 2, found in Homo sapiens (Human).